The chain runs to 475 residues: Methyltransferase-like protein 25B (475 aa).

Residues 186–210 (QRLVERAQRLDQELLQTLEKEEKRN) are a coiled coil. The chain crosses the membrane as a helical span at residues 406–426 (VVAFFSLALLLAPLVETLILL).

The protein belongs to the METTL25 family.

It localises to the membrane. This chain is Methyltransferase-like protein 25B, found in Bos taurus (Bovine).